Here is a 433-residue protein sequence, read N- to C-terminus: Ribosome biogenesis protein WDR12 homolog (433 aa).

M1 is modified (N-acetylmethionine). The interval L12–R96 is ubiquitin-like (UBL) domain. 7 WD repeats span residues L108 to L146, G148 to S191, G203 to E242, G270 to N308, F310 to P350, S356 to V396, and T399 to S433. The tract at residues T238 to E263 is disordered.

The protein belongs to the WD repeat WDR12/YTM1 family. Interacts with PES. Interacts with BOP1.

Its subcellular location is the nucleus. The protein resides in the nucleolus. It localises to the nucleoplasm. Required for maturation of ribosomal RNAs and formation of the large ribosomal subunit. The protein is Ribosome biogenesis protein WDR12 homolog of Arabidopsis thaliana (Mouse-ear cress).